Reading from the N-terminus, the 429-residue chain is Acetylornithine aminotransferase (429 aa).

Pyridoxal 5'-phosphate is bound by residues 126–127 (GA) and Phe-160. Arg-163 is a binding site for N(2)-acetyl-L-ornithine. 251 to 254 (DEVQ) contributes to the pyridoxal 5'-phosphate binding site. The residue at position 280 (Lys-280) is an N6-(pyridoxal phosphate)lysine. Ser-307 contacts N(2)-acetyl-L-ornithine. Residue Thr-308 coordinates pyridoxal 5'-phosphate.

It belongs to the class-III pyridoxal-phosphate-dependent aminotransferase family. ArgD subfamily. Homodimer. Pyridoxal 5'-phosphate is required as a cofactor.

It localises to the cytoplasm. It carries out the reaction N(2)-acetyl-L-ornithine + 2-oxoglutarate = N-acetyl-L-glutamate 5-semialdehyde + L-glutamate. It participates in amino-acid biosynthesis; L-arginine biosynthesis; N(2)-acetyl-L-ornithine from L-glutamate: step 4/4. With respect to regulation, N-acetylornithine aminotransferase activity is stimulated by the addition of Mg(2+), Ca(2+) or Mn(2+), and inhibited by the addition of Zn(2+), Cu(2+), Co(2+) or Ni(2+). In terms of biological role, catalyzes the reversible conversion of N-acetylornithine to N-acetylglutamate-5-semialdehyde. In vitro, also shows very low ornithine aminotransferase (OAT) and gamma-aminobutyrate aminotransferase (GABA-AT) activity, catalyzing the conversion of ornithine (Orn) to glutamate-5-semialdehyde and of gamma-aminobutyric acid (GABA) to succinate semialdehyde. It has been shown to function as a GABA-AT and contributes to closing the tricarboxylic acid cycle of Synechocystis sp. PCC6803 via the GABA shunt. However, the catalytic efficiency toward N-acetylornithine is 2500-fold and 10700-fold higher than that toward ornithine and gamma-aminobutyrate, respectively, indicating that the protein mainly functions as an N-acetylornithine aminotransferase. This is Acetylornithine aminotransferase from Synechocystis sp. (strain ATCC 27184 / PCC 6803 / Kazusa).